We begin with the raw amino-acid sequence, 614 residues long: Numb-like protein (614 aa).

Disordered stretches follow at residues 1 to 68 (MSRS…QWQA), 223 to 283 (GSFR…PVAA), 371 to 420 (FASA…LEEV), 448 to 468 (QQQQATSVPPMPTMAPTLQPF), and 539 to 614 (LGKA…EIEL). The 150-residue stretch at 74–223 (RKGTCSFPVR…ASRTSFAREG (150 aa)) folds into the PID domain. Phosphoserine occurs at positions 224 and 228. Residues 233–245 (PAEREAGDKKKAE) are compositionally biased toward basic and acidic residues. Low complexity predominate over residues 246–260 (AAAAPAVAPGPAQPG). S263 is subject to Phosphoserine. T279 carries the post-translational modification Phosphothreonine. The segment covering 371–390 (FASAGAPVPGPPSATTGTSA) has biased composition (low complexity). Positions 409–418 (TPSEAERWLE) are enriched in basic and acidic residues. S411 carries the post-translational modification Phosphoserine. Positions 563–578 (NGAPWPPEPAPAPAPE) are enriched in pro residues.

As to quaternary structure, associates with EPS15 and NOTCH1. Interacts (via PTB domain) with MAP3K7IP2 (via C-terminal). Interacts (via C-terminal) with TRAF6 (via TRAF domains).

The protein localises to the cytoplasm. Plays a role in the process of neurogenesis. Required throughout embryonic neurogenesis to maintain neural progenitor cells, also called radial glial cells (RGCs), by allowing their daughter cells to choose progenitor over neuronal cell fate. Not required for the proliferation of neural progenitor cells before the onset of embryonic neurogenesis. Also required postnatally in the subventricular zone (SVZ) neurogenesis by regulating SVZ neuroblasts survival and ependymal wall integrity. Negative regulator of NF-kappa-B signaling pathway. The inhibition of NF-kappa-B activation is mediated at least in part, by preventing MAP3K7IP2 to interact with polyubiquitin chains of TRAF6 and RIPK1 and by stimulating the 'Lys-48'-linked polyubiquitination and degradation of TRAF6 in cortical neurons. In Rattus norvegicus (Rat), this protein is Numb-like protein (Numbl).